Here is a 103-residue protein sequence, read N- to C-terminus: Large ribosomal subunit protein bL21 (103 aa).

Belongs to the bacterial ribosomal protein bL21 family. As to quaternary structure, part of the 50S ribosomal subunit. Contacts protein L20.

In terms of biological role, this protein binds to 23S rRNA in the presence of protein L20. In Herminiimonas arsenicoxydans, this protein is Large ribosomal subunit protein bL21.